We begin with the raw amino-acid sequence, 217 residues long: Somatotropin (217 aa).

The N-terminal stretch at 1 to 24 (MAAGSWTSLLLAFTLLCLPQLREA) is a signal peptide. H44 is a binding site for Zn(2+). C79 and C191 are joined by a disulfide. Position 132 is a phosphoserine (S132). E200 serves as a coordination point for Zn(2+). C208 and C215 are joined by a disulfide.

Belongs to the somatotropin/prolactin family.

It is found in the secreted. Plays an important role in growth control. Its major role in stimulating body growth is to stimulate the liver and other tissues to secrete IGF1. It stimulates both the differentiation and proliferation of myoblasts. It also stimulates amino acid uptake and protein synthesis in muscle and other tissues. This is Somatotropin (GH1) from Callithrix jacchus (White-tufted-ear marmoset).